The following is a 461-amino-acid chain: Cysteine--tRNA ligase (461 aa).

C28 lines the Zn(2+) pocket. The 'HIGH' region signature appears at 30–40 (ITVYDLCHIGH). 3 residues coordinate Zn(2+): C209, H234, and E238. A 'KMSKS' region motif is present at residues 266-270 (KMSKS). K269 provides a ligand contact to ATP.

The protein belongs to the class-I aminoacyl-tRNA synthetase family. As to quaternary structure, monomer. Requires Zn(2+) as cofactor.

It localises to the cytoplasm. The catalysed reaction is tRNA(Cys) + L-cysteine + ATP = L-cysteinyl-tRNA(Cys) + AMP + diphosphate. This is Cysteine--tRNA ligase from Escherichia coli (strain 55989 / EAEC).